The chain runs to 150 residues: Triosephosphate isomerase (150 aa).

Asn9 and Lys11 together coordinate substrate. The active-site Electrophile is His95.

Belongs to the triosephosphate isomerase family. Homodimer.

It localises to the cytoplasm. The enzyme catalyses D-glyceraldehyde 3-phosphate = dihydroxyacetone phosphate. Its pathway is carbohydrate biosynthesis; gluconeogenesis. It participates in carbohydrate degradation; glycolysis; D-glyceraldehyde 3-phosphate from glycerone phosphate: step 1/1. The protein is Triosephosphate isomerase (tpiA) of Mycoplasmoides pirum (Mycoplasma pirum).